A 248-amino-acid polypeptide reads, in one-letter code: Proteasome subunit alpha (248 aa).

Belongs to the peptidase T1A family. In terms of assembly, the 20S proteasome core is composed of 14 alpha and 14 beta subunits that assemble into four stacked heptameric rings, resulting in a barrel-shaped structure. The two inner rings, each composed of seven catalytic beta subunits, are sandwiched by two outer rings, each composed of seven alpha subunits. The catalytic chamber with the active sites is on the inside of the barrel. Has a gated structure, the ends of the cylinder being occluded by the N-termini of the alpha-subunits. Is capped at one or both ends by the proteasome regulatory ATPase, PAN.

The protein localises to the cytoplasm. With respect to regulation, the formation of the proteasomal ATPase PAN-20S proteasome complex, via the docking of the C-termini of PAN into the intersubunit pockets in the alpha-rings, triggers opening of the gate for substrate entry. Interconversion between the open-gate and close-gate conformations leads to a dynamic regulation of the 20S proteasome proteolysis activity. Functionally, component of the proteasome core, a large protease complex with broad specificity involved in protein degradation. The chain is Proteasome subunit alpha from Methanothermobacter thermautotrophicus (strain ATCC 29096 / DSM 1053 / JCM 10044 / NBRC 100330 / Delta H) (Methanobacterium thermoautotrophicum).